The primary structure comprises 518 residues: Efflux pump terJ (518 aa).

A helical membrane pass occupies residues isoleucine 43–valine 63. The N-linked (GlcNAc...) asparagine glycan is linked to asparagine 79. Helical transmembrane passes span glutamine 82–glycine 102, leucine 112–glutamate 132, glycine 135–proline 155, alanine 177–alanine 197, tryptophan 204–valine 224, isoleucine 244–alanine 264, proline 272–glutamate 292, phenylalanine 311–tryptophan 331, glycine 339–alanine 359, glycine 364–cysteine 384, tryptophan 400–alanine 420, and serine 439–valine 459. Asparagine 466 carries an N-linked (GlcNAc...) asparagine glycan. The chain crosses the membrane as a helical span at residues alanine 477 to leucine 497.

The protein belongs to the major facilitator superfamily.

It localises to the cell membrane. In terms of biological role, efflux pump that might be required for efficient secretion of terrein or other secondary metabolies produced by the terrein genne cluster. In Aspergillus terreus (strain NIH 2624 / FGSC A1156), this protein is Efflux pump terJ.